Reading from the N-terminus, the 266-residue chain is MNSQFLTKLRQRNPLIHNITNIVAANFSANGLLAIGASPIMSACIEEMEEMAKLSQSLVINIGTLTGKDVEAMLLAGKTANQVGIPVVLDPVGVGATTFRQKTTALLLEQVQFSAIRGNAGELAYIAGVQWSTKGVDAGKGMADIAEIAHLVARKYQCIAVISGETDYISDGKRLAKLNNGTPLFPKITASGCLLSAVCSAFLAVAEQKDYFDALVEGCSAYAIAGEIAAQSLSSTQFGQFTLGLLDQLASLTPEQINQYARISYE.

M41 serves as a coordination point for substrate. ATP is bound by residues R117 and S163. A190 is a binding site for substrate.

It belongs to the Thz kinase family. The cofactor is Mg(2+).

It carries out the reaction 5-(2-hydroxyethyl)-4-methylthiazole + ATP = 4-methyl-5-(2-phosphooxyethyl)-thiazole + ADP + H(+). It functions in the pathway cofactor biosynthesis; thiamine diphosphate biosynthesis; 4-methyl-5-(2-phosphoethyl)-thiazole from 5-(2-hydroxyethyl)-4-methylthiazole: step 1/1. Its function is as follows. Catalyzes the phosphorylation of the hydroxyl group of 4-methyl-5-beta-hydroxyethylthiazole (THZ). This chain is Hydroxyethylthiazole kinase, found in Histophilus somni (strain 129Pt) (Haemophilus somnus).